The chain runs to 325 residues: Thiamine-monophosphate kinase (325 aa).

4 residues coordinate Mg(2+): Asp30, Ser45, Thr46, and Asp47. His54 contributes to the substrate binding site. Residues Asp75 and Asp122 each contribute to the Mg(2+) site. Residues 121–122 (GD) and Arg146 contribute to the ATP site. Asp212 lines the Mg(2+) pocket. Residue Ser214 participates in ATP binding. Asp215 provides a ligand contact to Mg(2+). Residues Glu263 and Tyr319 each contribute to the substrate site.

This sequence belongs to the thiamine-monophosphate kinase family.

It catalyses the reaction thiamine phosphate + ATP = thiamine diphosphate + ADP. It participates in cofactor biosynthesis; thiamine diphosphate biosynthesis; thiamine diphosphate from thiamine phosphate: step 1/1. Its function is as follows. Catalyzes the ATP-dependent phosphorylation of thiamine-monophosphate (TMP) to form thiamine-pyrophosphate (TPP), the active form of vitamin B1. This is Thiamine-monophosphate kinase from Escherichia coli O157:H7.